A 384-amino-acid polypeptide reads, in one-letter code: Sphingosine 1-phosphate receptor 3 (384 aa).

At 1-34 (MMINPLIYLHYNYTGKLDHRPTVGTSPGTRDPKT) the chain is on the extracellular side. The N-linked (GlcNAc...) asparagine glycan is linked to N12. A helical membrane pass occupies residues 35 to 55 (IAFLVVCSFIILENLTVLLAI). Residues 56–64 (WKNHRFHNR) lie on the Cytoplasmic side of the membrane. Residues 65 to 85 (MYFFIGNLALCDLLASVAYLV) form a helical membrane-spanning segment. Topologically, residues 86–105 (NLLLSGEKTLQLSPVLWFVR) are extracellular. Residues 106 to 126 (EGSMFVTLGASIFSLLAIAIE) traverse the membrane as a helical segment. Residues 127-144 (RHLTMIKMRPYDASKNYR) lie on the Cytoplasmic side of the membrane. Residues 145-165 (VFLLIGTCWLVAVLLGALPIL) form a helical membrane-spanning segment. Over 166–186 (GWNCLGNLPDCSTILPLYTKK) the chain is Extracellular. A helical membrane pass occupies residues 187–207 (YVAFCIIVFIVLLLAMSVLYA). At 208 to 235 (RIYILVKSSSQKVSKHRNSEHAMSLLRT) the chain is on the cytoplasmic side. Residues 236–256 (VIIVVGVFIACWMPIFVLLLL) traverse the membrane as a helical segment. At 257 to 271 (DVACERPCPILYKAD) the chain is on the extracellular side. A helical membrane pass occupies residues 272 to 292 (WFIAVAVLNSAMNPIIYTLAS). Residues 293–384 (REMRRAFLGL…REGEGGNGGR (92 aa)) lie on the Cytoplasmic side of the membrane. 2 stretches are compositionally biased toward polar residues: residues 315 to 325 (NDSGNKQFQEP) and 336 to 347 (QTHPNQSQQSSR). The disordered stretch occupies residues 315 to 384 (NDSGNKQFQE…REGEGGNGGR (70 aa)). Residues 349–359 (AELDREQETGH) show a composition bias toward basic and acidic residues.

It belongs to the G-protein coupled receptor 1 family.

The protein resides in the cell membrane. Functionally, receptor for the lysosphingolipid sphingosine 1-phosphate (S1P). In Takifugu rubripes (Japanese pufferfish), this protein is Sphingosine 1-phosphate receptor 3 (s1pr3).